A 396-amino-acid chain; its full sequence is NADH-quinone oxidoreductase subunit D (396 aa).

It belongs to the complex I 49 kDa subunit family. NDH-1 is composed of 14 different subunits. Subunits NuoB, C, D, E, F, and G constitute the peripheral sector of the complex.

Its subcellular location is the cell inner membrane. The catalysed reaction is a quinone + NADH + 5 H(+)(in) = a quinol + NAD(+) + 4 H(+)(out). In terms of biological role, NDH-1 shuttles electrons from NADH, via FMN and iron-sulfur (Fe-S) centers, to quinones in the respiratory chain. The immediate electron acceptor for the enzyme in this species is believed to be ubiquinone. Couples the redox reaction to proton translocation (for every two electrons transferred, four hydrogen ions are translocated across the cytoplasmic membrane), and thus conserves the redox energy in a proton gradient. The sequence is that of NADH-quinone oxidoreductase subunit D from Brucella anthropi (strain ATCC 49188 / DSM 6882 / CCUG 24695 / JCM 21032 / LMG 3331 / NBRC 15819 / NCTC 12168 / Alc 37) (Ochrobactrum anthropi).